The sequence spans 589 residues: Proline--tRNA ligase (589 aa).

This sequence belongs to the class-II aminoacyl-tRNA synthetase family. ProS type 1 subfamily. Homodimer.

The protein localises to the cytoplasm. The catalysed reaction is tRNA(Pro) + L-proline + ATP = L-prolyl-tRNA(Pro) + AMP + diphosphate. Functionally, catalyzes the attachment of proline to tRNA(Pro) in a two-step reaction: proline is first activated by ATP to form Pro-AMP and then transferred to the acceptor end of tRNA(Pro). As ProRS can inadvertently accommodate and process non-cognate amino acids such as alanine and cysteine, to avoid such errors it has two additional distinct editing activities against alanine. One activity is designated as 'pretransfer' editing and involves the tRNA(Pro)-independent hydrolysis of activated Ala-AMP. The other activity is designated 'posttransfer' editing and involves deacylation of mischarged Ala-tRNA(Pro). The misacylated Cys-tRNA(Pro) is not edited by ProRS. This Gloeobacter violaceus (strain ATCC 29082 / PCC 7421) protein is Proline--tRNA ligase.